The chain runs to 130 residues: Small ribosomal subunit protein uS8 (130 aa).

This sequence belongs to the universal ribosomal protein uS8 family. In terms of assembly, part of the 30S ribosomal subunit. Contacts proteins S5 and S12.

Its function is as follows. One of the primary rRNA binding proteins, it binds directly to 16S rRNA central domain where it helps coordinate assembly of the platform of the 30S subunit. This Erwinia tasmaniensis (strain DSM 17950 / CFBP 7177 / CIP 109463 / NCPPB 4357 / Et1/99) protein is Small ribosomal subunit protein uS8.